The chain runs to 290 residues: Ribosomal RNA small subunit methyltransferase A (290 aa).

Residues asparagine 27, leucine 29, glycine 54, glutamate 75, aspartate 100, and asparagine 125 each contribute to the S-adenosyl-L-methionine site.

Belongs to the class I-like SAM-binding methyltransferase superfamily. rRNA adenine N(6)-methyltransferase family. RsmA subfamily.

The protein resides in the cytoplasm. The catalysed reaction is adenosine(1518)/adenosine(1519) in 16S rRNA + 4 S-adenosyl-L-methionine = N(6)-dimethyladenosine(1518)/N(6)-dimethyladenosine(1519) in 16S rRNA + 4 S-adenosyl-L-homocysteine + 4 H(+). Specifically dimethylates two adjacent adenosines (A1518 and A1519) in the loop of a conserved hairpin near the 3'-end of 16S rRNA in the 30S particle. May play a critical role in biogenesis of 30S subunits. This is Ribosomal RNA small subunit methyltransferase A from Streptococcus pyogenes serotype M18 (strain MGAS8232).